The primary structure comprises 183 residues: Intraflagellar transport protein 27 homolog (183 aa).

GTP contacts are provided by residues 12-19 (GAPTVGKT), 63-67 (DVSGQ), and 120-123 (NKSD).

This sequence belongs to the small GTPase superfamily. Rab family. In terms of assembly, component of the IFT complex B.

The protein localises to the cell projection. The protein resides in the cilium. Its subcellular location is the flagellum. Its function is as follows. Small GTPase-like component of the intraflagellar transport (IFT) complex B required for both anterograde and retrograde intraflagellar transport. May be involved in cargo loading of the retrograde transport. This chain is Intraflagellar transport protein 27 homolog, found in Trypanosoma brucei brucei (strain 927/4 GUTat10.1).